The sequence spans 699 residues: Receptor-type tyrosine-protein phosphatase epsilon (699 aa).

The first 19 residues, 1–19, serve as a signal peptide directing secretion; it reads MEPFCPLLLASFSLSLARA. A compositionally biased stretch (low complexity) spans 20-36; that stretch reads GQGNDTTPTESNWTSTT. A disordered region spans residues 20–40; the sequence is GQGNDTTPTESNWTSTTAGPP. The Extracellular segment spans residues 20-45; that stretch reads GQGNDTTPTESNWTSTTAGPPDPGAS. N-linked (GlcNAc...) asparagine glycosylation is found at asparagine 23 and asparagine 31. A helical membrane pass occupies residues 46–68; that stretch reads QPLLTWLLLPLLLLLFLLAAYFF. Over 69-699 the chain is Cytoplasmic; sequence RFRKQRKAVV…DIFSDYANFK (631 aa). Tyrosine-protein phosphatase domains follow at residues 134-393 and 425-688; these read FREE…LLEY and LEEE…VQDF. Residues aspartate 302, 334–340, and glutamine 378 each bind substrate; that span reads CSAGVGR. Cysteine 334 functions as the Phosphocysteine intermediate in the catalytic mechanism. Cysteine 629 serves as the catalytic Phosphocysteine intermediate. At tyrosine 695 the chain carries Phosphotyrosine.

This sequence belongs to the protein-tyrosine phosphatase family. Receptor class 4 subfamily. In terms of assembly, monomer. Isoform 2: Homodimer. Can form oligomers. Dimerization is increased by oxidative stress and decreased by EGFR. Isoform 2 interacts with GRB2. In terms of processing, a catalytically active cytoplasmic form (p65) is produced by proteolytic cleavage of either isoform 1, isoform 2 or isoform 3. Phosphorylated on tyrosine residues by tyrosine kinase Neu. Post-translationally, glycosylated. Isoform 2 is expressed in the spleen and thymus (at protein level). Detected in fibroblasts, myeloid cells, macrophages, and T-cells but not in B-cell lines. Isoform 1 and isoform 2 are expressed predominantly in the brain, testes, and lungs, with lower levels present in lymph nodes, thymus, spleen, heart and mammary glands. Isoform 1 is expressed in osteoclasts and not in osteoblasts and its expression is related to osteoclast differentiation. It is also expressed in the erythrocytes. Isoform 2 is strongly expressed in skeletal muscle and L6 skeletal muscle cell line.

It localises to the cell membrane. Its subcellular location is the cytoplasm. It carries out the reaction O-phospho-L-tyrosyl-[protein] + H2O = L-tyrosyl-[protein] + phosphate. Inhibited by alendronate (ALN), orthovanadate, and phenylarsine oxide (PAO). In terms of biological role, acts as a negative regulator of insulin receptor (IR) signaling and is involved in insulin-induced glucose metabolism mainly through direct dephosphorylation and inactivation of IR in hepatocytes and liver. Plays a critical role in signaling transduction pathways and phosphoprotein network topology in red blood cells. May play a role in osteoclast formation and function. Acts as a negative regulator of insulin receptor (IR) signaling in skeletal muscle. Regulates insulin-induced tyrosine phosphorylation of insulin receptor (IR) and insulin receptor substrate 1 (IRS-1), phosphorylation of protein kinase B and glycogen synthase kinase-3 and insulin induced stimulation of glucose uptake. Functionally, isoform 1 and isoform 2 act as a negative regulator of FceRI-mediated signal transduction leading to cytokine production and degranulation, most likely by acting at the level of SYK to affect downstream events such as phosphorylation of SLP76 and LAT and mobilization of Ca(2+). The polypeptide is Receptor-type tyrosine-protein phosphatase epsilon (Ptpre) (Mus musculus (Mouse)).